The chain runs to 669 residues: MFAPATQPQQQHEQKKQSETVSSAEEDALKWNTDCVYFLASPLTCKKGPECEYRHSEYARMNPRDCYYWLNGNCLNPKCGFRHPPLEGLLGNQGGAPAVSVQPIHATAQHPSVAKQPVPCLFFQKGMCMKGDMCSFLHTPNPAAYKKQHPVEAKPATDPQCSKKPIENNTEEKKLPDVNLSKVVKGHTDISAAPRVASTGLRDSRSVEGYIPNHVGYEPVVQRKGPGFPSFTEGGHSTQLLQKYGSDDNNSFHNGKDADDVLRESSPGFDVLVDNEAGDSEYYHVEDRYGRRSQERGNSEYDPDFSAIADGDKEALREQRFDSYDRREDRGWGHRRVSSEREDRLDRRVYAEDERSENILESDLRYRLAKQRKGNGMRLSVGGHDYAAPDSSMDRGYRESRRDTPRENSISSSRLQGRIKLRERSNGEEGHHFDRRSERGRDRSELPSQGRLRDRIKGRLEENHSGNQERGFGAPWARRREMEDERKSAPKSSREESKPEPSLGKRKSFEEDHHSHKRSRDSFAAPLPFSEILKRKKAAASGGSRNNNKDETISKEEAGDEIKLITEEKTEVVSEPKAEVEEEGTVMEEEEIVGEEVYEGNEDEQAYEGDELNGEYYYEEGYEEEGGEYAYEEGEEVVYAAEEGEEEATEGGEGEGEEDIEKKTVEMLS.

Residues 1 to 11 (MFAPATQPQQQ) are compositionally biased toward low complexity. The disordered stretch occupies residues 1–23 (MFAPATQPQQQHEQKKQSETVSS). 3 C3H1-type zinc fingers span residues 34–58 (DCVY…HSEY), 60–86 (RMNP…HPPL), and 114–141 (AKQP…HTPN). Disordered stretches follow at residues 150–175 (PVEA…EKKL), 285–306 (VEDR…PDFS), 376–589 (GMRL…VMEE), and 642–669 (EEGE…EMLS). 6 stretches are compositionally biased toward basic and acidic residues: residues 164-175 (KPIENNTEEKKL), 285-299 (VEDR…RGNS), 392-406 (SMDR…DTPR), 420-464 (KLRE…EENH), 478-499 (RRRE…ESKP), and 547-579 (NNKD…PKAE). Acidic residues-rich tracts occupy residues 580–589 (VEEEGTVMEE) and 642–659 (EEGE…GEED). Over residues 660–669 (IEKKTVEMLS) the composition is skewed to basic and acidic residues.

In Arabidopsis thaliana (Mouse-ear cress), this protein is Zinc finger CCCH domain-containing protein 17.